An 898-amino-acid polypeptide reads, in one-letter code: Alanine--tRNA ligase (898 aa).

The Zn(2+) site is built by His584, His588, Cys686, and His690.

It belongs to the class-II aminoacyl-tRNA synthetase family. It depends on Zn(2+) as a cofactor.

The protein localises to the cytoplasm. It carries out the reaction tRNA(Ala) + L-alanine + ATP = L-alanyl-tRNA(Ala) + AMP + diphosphate. Catalyzes the attachment of alanine to tRNA(Ala) in a two-step reaction: alanine is first activated by ATP to form Ala-AMP and then transferred to the acceptor end of tRNA(Ala). Also edits incorrectly charged Ser-tRNA(Ala) and Gly-tRNA(Ala) via its editing domain. In Myxococcus xanthus (strain DK1622), this protein is Alanine--tRNA ligase.